The sequence spans 172 residues: uncharacterized protein (172 aa).

Residues 3-171 enclose the PfpI endopeptidase domain; it reads KKVAIILADE…FNREIVKKLE (169 aa).

The protein belongs to the peptidase C56 family.

This is an uncharacterized protein from Staphylococcus epidermidis (strain ATCC 35984 / DSM 28319 / BCRC 17069 / CCUG 31568 / BM 3577 / RP62A).